Here is an 81-residue protein sequence, read N- to C-terminus: U10-myrmicitoxin-Mri1b (81 aa).

A signal peptide spans 1–26 (MRLSYISLTLAIIFVMAIVHAPETEA). The propeptide occupies 27-52 (KAYPEADAVAEAIAVGEADAVGVADP). V80 carries the valine amide modification.

It belongs to the formicidae venom precursor-01 superfamily. Expressed by the venom gland.

Its subcellular location is the secreted. Functionally, induces paralysis after injection into blowflies (L.caesar), and then death within 24 hours. May have antimicrobial properties, like most ant linear peptides. The polypeptide is U10-myrmicitoxin-Mri1b (Manica rubida (European giant red ant)).